A 1969-amino-acid polypeptide reads, in one-letter code: Hybrid signal transduction histidine kinase B (1969 aa).

Over residues 1 to 10 the composition is skewed to polar residues; sequence MEKSEQTNSF. 5 disordered regions span residues 1–91, 218–335, 412–436, 468–505, and 551–598; these read MEKS…HETK, KINE…KTKQ, QQQQ…SSDK, NNIN…KNKL, and GSGG…YNNN. Residues 11–55 are compositionally biased toward low complexity; sequence ESSNNNNNNIDSNINNNLENNNNKNNNNNNNNNNNNNNNNNNIEN. The span at 56-65 shows a compositional bias: basic and acidic residues; that stretch reads SIDKNNKEDN. The span at 72–86 shows a compositional bias: basic residues; sequence SHRKHRTRLKSKKGN. Residues 242–252 show a composition bias toward polar residues; it reads TNSSILKSSEQ. The span at 280–292 shows a compositional bias: low complexity; that stretch reads SSSSDEGSDNSKS. Over residues 293–304 the composition is skewed to polar residues; sequence QHSSVNTPTLSR. Residues 313–335 are compositionally biased toward low complexity; it reads SQQSQKQSQQQSQQPQQQNKTKQ. The segment covering 416 to 425 has biased composition (basic residues); the sequence is QHHRHYHHHI. Polar residues predominate over residues 469–492; it reads NINIQAPSTPVQSRNYPLFTTQSP. The segment covering 551-571 has biased composition (gly residues); it reads GSGGGGSGGGGGGGGGGGGIG. A compositionally biased stretch (low complexity) spans 574 to 598; it reads SSFLDDNNNLNNGENFKNSNSYNNN. A run of 5 helical transmembrane segments spans residues 660–680, 684–704, 708–728, 747–767, and 795–815; these read AYIL…STIL, EWFI…LGKI, MYLI…TSII, LVMI…VILI, and FGEL…YTIL. Residues 967 to 1188 enclose the Histidine kinase domain; it reads TVSHELRTPI…TFSFTIPCGI (222 aa). His970 bears the Phosphohistidine; by autocatalysis mark. Disordered regions lie at residues 1359-1415, 1521-1563, 1617-1709, and 1755-1832; these read ASKD…HQLI, GIAL…TTQS, NNNF…SSHS, and QKPQ…TAAA. Over residues 1373–1398 the composition is skewed to gly residues; sequence GDGGRSLSGGGGGVGSNGNGNGGGGL. Composition is skewed to low complexity over residues 1399–1410 and 1527–1549; these read DSNISPSELSSS and SSSK…SPNS. Polar residues-rich tracts occupy residues 1554 to 1563 and 1626 to 1665; these read ELGNGKTTQS and KPST…SPHR. 2 stretches are compositionally biased toward low complexity: residues 1755 to 1774 and 1781 to 1821; these read QKPQ…TSTQ and KTTT…TTTT. Residues 1840–1967 enclose the Response regulatory domain; sequence KILLVEDNFV…DILIQMIKKH (128 aa). 4-aspartylphosphate is present on Asp1889.

It localises to the membrane. It carries out the reaction ATP + protein L-histidine = ADP + protein N-phospho-L-histidine.. Functionally, acts in the cytokinin signal transduction pathway that regulates spore germination. Required for the maintenance of spore dormancy. Does not appear to act as a cytokinin receptor. Probably undergoes ATP-dependent autophosphorylation at a conserved histidine residue in the kinase core, which is followed by transfer of the phosphoryl group to a conserved aspartate residue in the receiver domain. This is Hybrid signal transduction histidine kinase B (dhkB) from Dictyostelium discoideum (Social amoeba).